The following is a 124-amino-acid chain: Small ribosomal subunit protein uS12 (124 aa).

Asp89 carries the 3-methylthioaspartic acid modification.

The protein belongs to the universal ribosomal protein uS12 family. In terms of assembly, part of the 30S ribosomal subunit. Contacts proteins S8 and S17. May interact with IF1 in the 30S initiation complex.

Its function is as follows. With S4 and S5 plays an important role in translational accuracy. In terms of biological role, interacts with and stabilizes bases of the 16S rRNA that are involved in tRNA selection in the A site and with the mRNA backbone. Located at the interface of the 30S and 50S subunits, it traverses the body of the 30S subunit contacting proteins on the other side and probably holding the rRNA structure together. The combined cluster of proteins S8, S12 and S17 appears to hold together the shoulder and platform of the 30S subunit. The chain is Small ribosomal subunit protein uS12 from Leptospira biflexa serovar Patoc (strain Patoc 1 / Ames).